A 288-amino-acid polypeptide reads, in one-letter code: Acetyl-coenzyme A carboxylase carboxyl transferase subunit beta (288 aa).

Residues 32–288 (LFAKCPACKH…LELHTEVENV (257 aa)) enclose the CoA carboxyltransferase N-terminal domain. Zn(2+)-binding residues include cysteine 36, cysteine 39, cysteine 54, and cysteine 57. Residues 36-57 (CPACKHTIYQKDLGKNKVCPNC) form a C4-type zinc finger.

Belongs to the AccD/PCCB family. Acetyl-CoA carboxylase is a heterohexamer composed of biotin carboxyl carrier protein (AccB), biotin carboxylase (AccC) and two subunits each of ACCase subunit alpha (AccA) and ACCase subunit beta (AccD). It depends on Zn(2+) as a cofactor.

Its subcellular location is the cytoplasm. The catalysed reaction is N(6)-carboxybiotinyl-L-lysyl-[protein] + acetyl-CoA = N(6)-biotinyl-L-lysyl-[protein] + malonyl-CoA. Its pathway is lipid metabolism; malonyl-CoA biosynthesis; malonyl-CoA from acetyl-CoA: step 1/1. Its function is as follows. Component of the acetyl coenzyme A carboxylase (ACC) complex. Biotin carboxylase (BC) catalyzes the carboxylation of biotin on its carrier protein (BCCP) and then the CO(2) group is transferred by the transcarboxylase to acetyl-CoA to form malonyl-CoA. The sequence is that of Acetyl-coenzyme A carboxylase carboxyl transferase subunit beta from Lactococcus lactis subsp. cremoris (strain SK11).